The chain runs to 356 residues: Dihydroorotate dehydrogenase (quinone) (356 aa).

Residues 66 to 70 and T90 each bind FMN; that span reads AGFDK. K70 provides a ligand contact to substrate. 115–119 contributes to the substrate binding site; that stretch reads NRMGF. The FMN site is built by N143 and N176. N176 contacts substrate. The active-site Nucleophile is S179. N181 contributes to the substrate binding site. K212 and T240 together coordinate FMN. 241–242 serves as a coordination point for substrate; that stretch reads NT. Residues G266, G295, and 316 to 317 contribute to the FMN site; that span reads YT.

The protein belongs to the dihydroorotate dehydrogenase family. Type 2 subfamily. In terms of assembly, monomer. FMN serves as cofactor.

The protein localises to the cell membrane. The catalysed reaction is (S)-dihydroorotate + a quinone = orotate + a quinol. Its pathway is pyrimidine metabolism; UMP biosynthesis via de novo pathway; orotate from (S)-dihydroorotate (quinone route): step 1/1. In terms of biological role, catalyzes the conversion of dihydroorotate to orotate with quinone as electron acceptor. This chain is Dihydroorotate dehydrogenase (quinone), found in Rhodococcus erythropolis (strain PR4 / NBRC 100887).